A 313-amino-acid chain; its full sequence is GMP synthase [glutamine-hydrolyzing] subunit B (313 aa).

The region spanning 6–190 (KVWEKFIEEK…LGLPEKIYNR (185 aa)) is the GMPS ATP-PPase domain. 33–39 (SGGVDSS) is an ATP binding site.

In terms of assembly, heterodimer composed of a glutamine amidotransferase subunit (A) and a GMP-binding subunit (B).

It carries out the reaction XMP + L-glutamine + ATP + H2O = GMP + L-glutamate + AMP + diphosphate + 2 H(+). It functions in the pathway purine metabolism; GMP biosynthesis; GMP from XMP (L-Gln route): step 1/1. Catalyzes the synthesis of GMP from XMP. The protein is GMP synthase [glutamine-hydrolyzing] subunit B (guaAB) of Pyrococcus furiosus (strain ATCC 43587 / DSM 3638 / JCM 8422 / Vc1).